We begin with the raw amino-acid sequence, 286 residues long: Bifunctional protein FolD (286 aa).

NADP(+) is bound by residues 165–167 (GRS), Ser190, and Val231.

The protein belongs to the tetrahydrofolate dehydrogenase/cyclohydrolase family. As to quaternary structure, homodimer.

It catalyses the reaction (6R)-5,10-methylene-5,6,7,8-tetrahydrofolate + NADP(+) = (6R)-5,10-methenyltetrahydrofolate + NADPH. The catalysed reaction is (6R)-5,10-methenyltetrahydrofolate + H2O = (6R)-10-formyltetrahydrofolate + H(+). Its pathway is one-carbon metabolism; tetrahydrofolate interconversion. Its function is as follows. Catalyzes the oxidation of 5,10-methylenetetrahydrofolate to 5,10-methenyltetrahydrofolate and then the hydrolysis of 5,10-methenyltetrahydrofolate to 10-formyltetrahydrofolate. The sequence is that of Bifunctional protein FolD from Bacillus cereus (strain B4264).